The chain runs to 150 residues: Flagellar assembly factor FliW (150 aa).

The protein belongs to the FliW family. Interacts with translational regulator CsrA and flagellin(s).

The protein localises to the cytoplasm. Its function is as follows. Acts as an anti-CsrA protein, binds CsrA and prevents it from repressing translation of its target genes, one of which is flagellin. Binds to flagellin and participates in the assembly of the flagellum. The sequence is that of Flagellar assembly factor FliW from Thermoanaerobacter pseudethanolicus (strain ATCC 33223 / 39E) (Clostridium thermohydrosulfuricum).